Reading from the N-terminus, the 218-residue chain is Uracil-DNA glycosylase (218 aa).

The active-site Proton acceptor is D59.

It belongs to the uracil-DNA glycosylase (UDG) superfamily. UNG family.

Its subcellular location is the cytoplasm. The catalysed reaction is Hydrolyzes single-stranded DNA or mismatched double-stranded DNA and polynucleotides, releasing free uracil.. Functionally, excises uracil residues from the DNA which can arise as a result of misincorporation of dUMP residues by DNA polymerase or due to deamination of cytosine. This chain is Uracil-DNA glycosylase, found in Staphylococcus saprophyticus subsp. saprophyticus (strain ATCC 15305 / DSM 20229 / NCIMB 8711 / NCTC 7292 / S-41).